A 594-amino-acid polypeptide reads, in one-letter code: MSSIVNKSGTRFAPKVRQRRAATGGTPTPKPRTPQLFIPESKEIEEDNSDNDKGVDENETAIVEKPSLVGERSLEGFTLTGTNGHDNEIGDEGPIDASTQNPKADVIEDNVTLKPAPLQTHRDQKVPRSSRLASLSKDNESRPSFKPSFLDSSSNSNGTARRLSTISNKLPKKIRLGSITENDMNLKTFKRHRVLGKPSSAKKPAGAHRISIVSKISPPTAMTDSLDRNEFSSETSTSREADENENYVISKVKDIPKKVRDGESAKYFIDEENFTMAELCKPNFPIGQISENFEKSKMAKKAKLEKRRHLRELRMRARQEFKPLHSLTKEEQEEEEEKRKEERDKLLNADIPESDRKAHTAIQLKLNPDGTMAIDEETMVVDRHKNASIENEYKEKVDENPFANLYNYGSYGRGSYTDPWTVEEMIKFYKALSMWGTDFNLISQLYPYRSRKQVKAKFVNEEKKRPILIELALRSKLPPNFDEYCCEIKKNIGTVADFNEKLIELQNEHKHHMKEIEEAKNTAKEEDQTAQRLNDANLNKKGSGGIMTNDLKVYRKTEVVLGTIDDLKRKKLKERNNDDNEDNEGSEEEPEIDQ.

A disordered region spans residues 1–169; it reads MSSIVNKSGT…ARRLSTISNK (169 aa). Residue Ser-49 is modified to Phosphoserine. The segment covering 150 to 168 has biased composition (polar residues); that stretch reads LDSSSNSNGTARRLSTISN. Phosphoserine is present on Ser-178. Disordered stretches follow at residues 217–245 and 317–343; these read SPPT…DENE and ARQE…KEER. Basic and acidic residues-rich tracts occupy residues 225 to 241 and 317 to 330; these read SLDR…SREA and ARQE…LTKE. Residues 415–466 form the SANT domain; the sequence is SYTDPWTVEEMIKFYKALSMWGTDFNLISQLYPYRSRKQVKAKFVNEEKKRP. The span at 520–529 shows a compositional bias: basic and acidic residues; that stretch reads KNTAKEEDQT. Disordered stretches follow at residues 520 to 547 and 567 to 594; these read KNTA…GGIM and LKRK…EIDQ. Residues 579 to 594 are compositionally biased toward acidic residues; it reads DNEDNEGSEEEPEIDQ.

This sequence belongs to the TFC5 family. As to quaternary structure, TFIIIB comprises the TATA-binding protein (TBP), the B-related factor (BRF) and the B'' component (BDP1). Interacts with TFC4.

It is found in the nucleus. Functionally, general activator of RNA polymerase III transcription. In Saccharomyces cerevisiae (strain ATCC 204508 / S288c) (Baker's yeast), this protein is Transcription factor TFIIIB component B'' (BDP1).